The chain runs to 214 residues: Probable GTP-binding protein EngB (214 aa).

The region spanning 31–214 (GPPEIAFAGR…LRAAILQTIA (184 aa)) is the EngB-type G domain. GTP is bound by residues 39–46 (GRSNVGKS), 66–70 (GRTQE), 93–96 (DMPG), 160–163 (TKSD), and 194–196 (TSS). Residues Ser-46 and Thr-68 each contribute to the Mg(2+) site.

Belongs to the TRAFAC class TrmE-Era-EngA-EngB-Septin-like GTPase superfamily. EngB GTPase family. It depends on Mg(2+) as a cofactor.

Necessary for normal cell division and for the maintenance of normal septation. This is Probable GTP-binding protein EngB from Bartonella tribocorum (strain CIP 105476 / IBS 506).